The chain runs to 173 residues: Gamma-crystallin S-1 (173 aa).

2 Beta/gamma crystallin 'Greek key' domains span residues 2–40 (GKII…RVES) and 41–83 (DWWV…RMLP). A connecting peptide region spans residues 84 to 88 (HTGRS). Beta/gamma crystallin 'Greek key' domains are found at residues 89-129 (YRMR…QVMD) and 130-172 (GYWI…RRIM).

It belongs to the beta/gamma-crystallin family.

Functionally, crystallins are the dominant structural components of the vertebrate eye lens. This Chiloscyllium indicum (Slender bamboo shark) protein is Gamma-crystallin S-1 (GS-1).